The sequence spans 237 residues: uncharacterized protein (237 aa).

Residues 3 to 116 (SALLIDDERF…RLAKTVQRLL (114 aa)) enclose the Response regulatory domain. 4-aspartylphosphate is present on Asp54. The HTH LytTR-type domain maps to 135–236 (IPCTGLNRIV…LKELKEMLGF (102 aa)).

This is an uncharacterized protein from Vibrio cholerae serotype O1 (strain ATCC 39315 / El Tor Inaba N16961).